Consider the following 1026-residue polypeptide: Multidrug resistance protein MdtC (1026 aa).

11 helical membrane passes run 15–35 (ILIA…LPVA), 333–353 (EVEE…FLFL), 360–380 (LIPA…MYLC), 387–407 (LSLM…IVVL), 431–451 (VGFT…PLLL), 463–483 (FAVT…TLTP), 528–548 (LVGV…IAIP), 853–873 (LILI…LYES), 897–917 (LFNA…IGIV), 953–973 (PIMM…LSDG), and 984–1004 (ITIV…TPVV).

Belongs to the resistance-nodulation-cell division (RND) (TC 2.A.6) family. MdtC subfamily. Part of a tripartite efflux system composed of MdtA, MdtB and MdtC. MdtC forms a heteromultimer with MdtB.

It is found in the cell inner membrane. The sequence is that of Multidrug resistance protein MdtC from Salmonella paratyphi B (strain ATCC BAA-1250 / SPB7).